Here is a 69-residue protein sequence, read N- to C-terminus: Mu-conotoxin-like Am3.1 (69 aa).

The first 20 residues, 1–20, serve as a signal peptide directing secretion; that stretch reads MMSKLRVLLIICLLLFPLTA. Positions 21 to 52 are excised as a propeptide; sequence VPLDGDQPADRPAERTQDDISSEHHPMFDAVR. The interval 22–43 is disordered; sequence PLDGDQPADRPAERTQDDISSE. A compositionally biased stretch (basic and acidic residues) spans 28–43; it reads PADRPAERTQDDISSE. A 4-hydroxyproline; partial; in minor form modification is found at P66. A Cysteine amide modification is found at C68.

Belongs to the conotoxin M family. Post-translationally, mostly non-hydroxylated. Contains 3 disulfide bonds. As to expression, expressed by the venom duct.

It is found in the secreted. Mu-conotoxins block voltage-gated sodium channels (Nav). This chain is Mu-conotoxin-like Am3.1, found in Conus amadis (Amadis cone).